The sequence spans 288 residues: MAAEITSTDYIAHHLTNWTYGYLPGEGWKVAHTAKEAGEMGFMAIHLDSMLWSIGLGIVFCALFWLVAKKATAGVPGKLQAAIEMIVEFVDTNVRDSYNGTSKLIAPLALTIFVWIFLMNLMDLMPIDYIPVLAQKVGAAMGHDPHHVFFKIVPTTDPNITLGMSFSVFALIIYYSIKEKGLGGFVGELTLHPFSAKNPIAKIILIPINFILEFVTLIAKPISLGLRLFGNMYAGELIFVLIALMPFWIQWALSVPWAIFHILIITLQAFVFMMLTIVYLSLASQTEH.

The next 6 helical transmembrane spans lie at 47–67 (LDSM…FWLV), 104–124 (LIAP…LMDL), 157–177 (DPNI…YYSI), 199–219 (PIAK…TLIA), 237–257 (LIFV…SVPW), and 258–278 (AIFH…LTIV).

The protein belongs to the ATPase A chain family. As to quaternary structure, F-type ATPases have 2 components, CF(1) - the catalytic core - and CF(0) - the membrane proton channel. CF(1) has five subunits: alpha(3), beta(3), gamma(1), delta(1), epsilon(1). CF(0) has three main subunits: a(1), b(2) and c(9-12). The alpha and beta chains form an alternating ring which encloses part of the gamma chain. CF(1) is attached to CF(0) by a central stalk formed by the gamma and epsilon chains, while a peripheral stalk is formed by the delta and b chains.

Its subcellular location is the cell inner membrane. Functionally, key component of the proton channel; it plays a direct role in the translocation of protons across the membrane. This is ATP synthase subunit a from Psychrobacter sp. (strain PRwf-1).